We begin with the raw amino-acid sequence, 259 residues long: Small ribosomal subunit protein uS2 (259 aa).

A disordered region spans residues 234–259 (VAEDSEEVSTVDADAITAEDFETEEV). Over residues 250-259 (TAEDFETEEV) the composition is skewed to acidic residues.

Belongs to the universal ribosomal protein uS2 family.

The chain is Small ribosomal subunit protein uS2 from Sulfurimonas denitrificans (strain ATCC 33889 / DSM 1251) (Thiomicrospira denitrificans (strain ATCC 33889 / DSM 1251)).